A 141-amino-acid chain; its full sequence is ATP synthase epsilon chain (141 aa).

The protein belongs to the ATPase epsilon chain family. In terms of assembly, F-type ATPases have 2 components, CF(1) - the catalytic core - and CF(0) - the membrane proton channel. CF(1) has five subunits: alpha(3), beta(3), gamma(1), delta(1), epsilon(1). CF(0) has three main subunits: a, b and c.

Its subcellular location is the cell inner membrane. Produces ATP from ADP in the presence of a proton gradient across the membrane. This Dechloromonas aromatica (strain RCB) protein is ATP synthase epsilon chain.